We begin with the raw amino-acid sequence, 329 residues long: Beta-ketoacyl-[acyl-carrier-protein] synthase III (329 aa).

Residues Cys-113 and His-255 contribute to the active site. The interval 256–260 (QANQR) is ACP-binding. Asn-285 is a catalytic residue.

Belongs to the thiolase-like superfamily. FabH family. As to quaternary structure, homodimer.

It localises to the cytoplasm. It catalyses the reaction malonyl-[ACP] + acetyl-CoA + H(+) = 3-oxobutanoyl-[ACP] + CO2 + CoA. Its pathway is lipid metabolism; fatty acid biosynthesis. Its function is as follows. Catalyzes the condensation reaction of fatty acid synthesis by the addition to an acyl acceptor of two carbons from malonyl-ACP. Catalyzes the first condensation reaction which initiates fatty acid synthesis and may therefore play a role in governing the total rate of fatty acid production. Possesses both acetoacetyl-ACP synthase and acetyl transacylase activities. Its substrate specificity determines the biosynthesis of branched-chain and/or straight-chain of fatty acids. This Chlorobaculum tepidum (strain ATCC 49652 / DSM 12025 / NBRC 103806 / TLS) (Chlorobium tepidum) protein is Beta-ketoacyl-[acyl-carrier-protein] synthase III.